The following is a 459-amino-acid chain: Argininosuccinate lyase (459 aa).

The protein belongs to the lyase 1 family. Argininosuccinate lyase subfamily.

Its subcellular location is the cytoplasm. The enzyme catalyses 2-(N(omega)-L-arginino)succinate = fumarate + L-arginine. It functions in the pathway amino-acid biosynthesis; L-arginine biosynthesis; L-arginine from L-ornithine and carbamoyl phosphate: step 3/3. The protein is Argininosuccinate lyase of Prochlorococcus marinus (strain MIT 9301).